Reading from the N-terminus, the 60-residue chain is UPF0434 protein YcaR (60 aa).

This sequence belongs to the UPF0434 family.

The protein is UPF0434 protein YcaR of Escherichia fergusonii (strain ATCC 35469 / DSM 13698 / CCUG 18766 / IAM 14443 / JCM 21226 / LMG 7866 / NBRC 102419 / NCTC 12128 / CDC 0568-73).